Reading from the N-terminus, the 246-residue chain is tRNA (guanine-N(1)-)-methyltransferase (246 aa).

S-adenosyl-L-methionine is bound by residues G113 and 133–138; that span reads IGDYVL.

This sequence belongs to the RNA methyltransferase TrmD family. Homodimer.

Its subcellular location is the cytoplasm. The enzyme catalyses guanosine(37) in tRNA + S-adenosyl-L-methionine = N(1)-methylguanosine(37) in tRNA + S-adenosyl-L-homocysteine + H(+). Its function is as follows. Specifically methylates guanosine-37 in various tRNAs. The chain is tRNA (guanine-N(1)-)-methyltransferase from Haemophilus influenzae (strain PittEE).